We begin with the raw amino-acid sequence, 368 residues long: Glutamate 5-kinase (368 aa).

An ATP-binding site is contributed by lysine 12. The substrate site is built by serine 52, aspartate 139, and asparagine 151. ATP is bound by residues 171–172 (SD) and 213–219 (TGGMKTK). The PUA domain maps to 277-354 (KGALIIDDGA…KEIEKLLGYI (78 aa)).

It belongs to the glutamate 5-kinase family.

The protein resides in the cytoplasm. It catalyses the reaction L-glutamate + ATP = L-glutamyl 5-phosphate + ADP. Its pathway is amino-acid biosynthesis; L-proline biosynthesis; L-glutamate 5-semialdehyde from L-glutamate: step 1/2. Its function is as follows. Catalyzes the transfer of a phosphate group to glutamate to form L-glutamate 5-phosphate. The polypeptide is Glutamate 5-kinase (Pelagibacter ubique (strain HTCC1062)).